We begin with the raw amino-acid sequence, 590 residues long: (-)-alpha-terpineol synthase (590 aa).

The Mg(2+) site is built by D339, D343, D483, T487, and E491. A DDXXD motif motif is present at residues 339 to 343 (DDVYD).

This sequence belongs to the terpene synthase family. Mg(2+) is required as a cofactor.

It carries out the reaction (2E)-geranyl diphosphate + H2O = (S)-alpha-terpineol + diphosphate. Its pathway is secondary metabolite biosynthesis; terpenoid biosynthesis. Its function is as follows. Mediates the conversion of geranyl diphosphate into alpha-terpineol, a monoterpenol. Monoterpenols contribute to the final grape and wine aroma and flavor. Also forms some 1,8-cineole and traces of other monoterpenoids. The sequence is that of (-)-alpha-terpineol synthase from Vitis vinifera (Grape).